Consider the following 367-residue polypeptide: MNVLEQFKQLDNMPEQYKTMDRDELEARARAVKEQLGRRLFIPGHHYQKDEVIQFADATGDSLQLAQLAAKNNEAEYIVFCGVHFMAETADILTSEEQTVILPDLRAGCSMADMADVFQVERAWAALTDRFGETILPLVYVNSTAAIKAFVGRNGGATVTSSNAQKMVAWAFSQKERIFFLPDQHLGRNTAYALGVGLDEMAVWDPYEETLQGNGDFDKVKVILWKGHCSVHENFNVRQIEHIRQTKPETKVIVHPECSWDVVQQADYAGSTKYIIETIRNASPGSRWAIGTEMNLVNRLMHEHPDKEIISLNPYMCPCLTMNRIDLPHFVWALESLSEGTVVNRITVPKEVAFEAKLALERMLALA.

H45 and S62 together coordinate iminosuccinate. C109 contacts [4Fe-4S] cluster. Iminosuccinate is bound by residues 140–142 (YVN) and S161. C229 is a binding site for [4Fe-4S] cluster. Iminosuccinate is bound by residues 255-257 (HPE) and T272. C319 contacts [4Fe-4S] cluster.

The protein belongs to the quinolinate synthase family. Type 3 subfamily. [4Fe-4S] cluster serves as cofactor.

The protein localises to the cytoplasm. It catalyses the reaction iminosuccinate + dihydroxyacetone phosphate = quinolinate + phosphate + 2 H2O + H(+). The protein operates within cofactor biosynthesis; NAD(+) biosynthesis; quinolinate from iminoaspartate: step 1/1. Functionally, catalyzes the condensation of iminoaspartate with dihydroxyacetone phosphate to form quinolinate. The sequence is that of Quinolinate synthase from Geobacillus thermodenitrificans (strain NG80-2).